We begin with the raw amino-acid sequence, 451 residues long: Tubulin alpha-2 chain (451 aa).

Residue glutamine 11 participates in GTP binding. Lysine 40 bears the N6-acetyllysine mark. GTP contacts are provided by glutamate 71, glycine 144, threonine 145, threonine 179, asparagine 206, and asparagine 228. Position 71 (glutamate 71) interacts with Mg(2+). Glutamate 254 is a catalytic residue.

This sequence belongs to the tubulin family. In terms of assembly, dimer of alpha and beta chains. A typical microtubule is a hollow water-filled tube with an outer diameter of 25 nm and an inner diameter of 15 nM. Alpha-beta heterodimers associate head-to-tail to form protofilaments running lengthwise along the microtubule wall with the beta-tubulin subunit facing the microtubule plus end conferring a structural polarity. Microtubules usually have 13 protofilaments but different protofilament numbers can be found in some organisms and specialized cells. It depends on Mg(2+) as a cofactor. Undergoes a tyrosination/detyrosination cycle, the cyclic removal and re-addition of a C-terminal tyrosine residue by the enzymes tubulin tyrosine carboxypeptidase (TTCP) and tubulin tyrosine ligase (TTL), respectively. In terms of processing, acetylation of alpha chains at Lys-40 stabilizes microtubules and affects affinity and processivity of microtubule motors. This modification has a role in multiple cellular functions, ranging from cell motility, cell cycle progression or cell differentiation to intracellular trafficking and signaling.

The protein resides in the cytoplasm. It localises to the cytoskeleton. It carries out the reaction GTP + H2O = GDP + phosphate + H(+). In terms of biological role, tubulin is the major constituent of microtubules, a cylinder consisting of laterally associated linear protofilaments composed of alpha- and beta-tubulin heterodimers. Microtubules grow by the addition of GTP-tubulin dimers to the microtubule end, where a stabilizing cap forms. Below the cap, tubulin dimers are in GDP-bound state, owing to GTPase activity of alpha-tubulin. In Hordeum vulgare (Barley), this protein is Tubulin alpha-2 chain (TUBA2).